The chain runs to 1091 residues: Isoleucine--tRNA ligase (1091 aa).

Residues 48 to 58 carry the 'HIGH' region motif; the sequence is PFATGLPHFGH. A 'KMSKS' region motif is present at residues 625–629; it reads KMSKA. Residue Lys-628 coordinates ATP.

The protein belongs to the class-I aminoacyl-tRNA synthetase family. IleS type 2 subfamily. Monomer. It depends on Zn(2+) as a cofactor.

Its subcellular location is the cytoplasm. The catalysed reaction is tRNA(Ile) + L-isoleucine + ATP = L-isoleucyl-tRNA(Ile) + AMP + diphosphate. Functionally, catalyzes the attachment of isoleucine to tRNA(Ile). As IleRS can inadvertently accommodate and process structurally similar amino acids such as valine, to avoid such errors it has two additional distinct tRNA(Ile)-dependent editing activities. One activity is designated as 'pretransfer' editing and involves the hydrolysis of activated Val-AMP. The other activity is designated 'posttransfer' editing and involves deacylation of mischarged Val-tRNA(Ile). This is Isoleucine--tRNA ligase from Treponema pallidum (strain Nichols).